The sequence spans 800 residues: Phenylalanine--tRNA ligase beta subunit (800 aa).

The tRNA-binding domain maps to 39 to 154 (TKDIKNLVVG…ESQVPGTDAL (116 aa)). The B5 domain maps to 408–483 (AFITPIDITA…RIYGYDDIPS (76 aa)). Positions 461, 467, 470, and 471 each coordinate Mg(2+). The FDX-ACB domain maps to 708 to 800 (PRFPGMSRDI…ALIEQGAVIR (93 aa)).

Belongs to the phenylalanyl-tRNA synthetase beta subunit family. Type 1 subfamily. In terms of assembly, tetramer of two alpha and two beta subunits. Mg(2+) is required as a cofactor.

The protein localises to the cytoplasm. It catalyses the reaction tRNA(Phe) + L-phenylalanine + ATP = L-phenylalanyl-tRNA(Phe) + AMP + diphosphate + H(+). The sequence is that of Phenylalanine--tRNA ligase beta subunit from Staphylococcus aureus (strain Mu50 / ATCC 700699).